Here is an 86-residue protein sequence, read N- to C-terminus: Protein Tat (86 aa).

The interaction with human CREBBP stretch occupies residues 1–24 (MEPVDPRLEPWKHPGSQPKTACTN). The tract at residues 1 to 48 (MEPVDPRLEPWKHPGSQPKTACTNCYCKKCCFHCQVCFITKALGISYG) is transactivation. The Zn(2+) site is built by cysteine 22, cysteine 25, and cysteine 27. The interval 22 to 37 (CTNCYCKKCCFHCQVC) is cysteine-rich. At lysine 28 the chain carries N6-acetyllysine; by host PCAF. Residues cysteine 30, histidine 33, cysteine 34, and cysteine 37 each coordinate Zn(2+). Residues 38 to 48 (FITKALGISYG) form a core region. Residues 48–58 (GRKKRRQRRRA) are compositionally biased toward basic residues. Residues 48–86 (GRKKRRQRRRAPQGSQTHQVSLSKQPTSQSRGDPTGPKE) form a disordered region. The Nuclear localization signal, RNA-binding (TAR), and protein transduction signature appears at 49–57 (RKKRRQRRR). Residues 49-86 (RKKRRQRRRAPQGSQTHQVSLSKQPTSQSRGDPTGPKE) are interaction with the host capping enzyme RNGTT. An N6-acetyllysine; by host EP300 and GCN5L2 mark is found at lysine 50 and lysine 51. Asymmetric dimethylarginine; by host PRMT6 is present on residues arginine 52 and arginine 53. The segment covering 60–79 (QGSQTHQVSLSKQPTSQSRG) has biased composition (polar residues). Lysine 71 is covalently cross-linked (Glycyl lysine isopeptide (Lys-Gly) (interchain with G-Cter in ubiquitin)). The Cell attachment site motif lies at 78-80 (RGD).

It belongs to the lentiviruses Tat family. Interacts with host CCNT1. Associates with the P-TEFb complex composed at least of Tat, P-TEFb (CDK9 and CCNT1), TAR RNA, RNA Pol II. Recruits the HATs CREBBP, TAF1/TFIID, EP300, PCAF and GCN5L2. Interacts with host KAT5/Tip60; this interaction targets the latter to degradation. Interacts with the host deacetylase SIRT1. Interacts with host capping enzyme RNGTT; this interaction stimulates RNGTT. Binds to host KDR, and to the host integrins ITGAV/ITGB3 and ITGA5/ITGB1. Interacts with host KPNB1/importin beta-1 without previous binding to KPNA1/importin alpha-1. Interacts with EIF2AK2. Interacts with host nucleosome assembly protein NAP1L1; this interaction may be required for the transport of Tat within the nucleus, since the two proteins interact at the nuclear rim. Interacts with host C1QBP/SF2P32; this interaction involves lysine-acetylated Tat. Interacts with the host chemokine receptors CCR2, CCR3 and CXCR4. Interacts with host DPP4/CD26; this interaction may trigger an anti-proliferative effect. Interacts with host LDLR. Interacts with the host extracellular matrix metalloproteinase MMP1. Interacts with host PRMT6; this interaction mediates Tat's methylation. Interacts with, and is ubiquitinated by MDM2/Hdm2. Interacts with host PSMC3 and HTATIP2. Interacts with STAB1; this interaction may overcome SATB1-mediated repression of IL2 and IL2RA (interleukin) in T cells by binding to the same domain than HDAC1. Interacts (when acetylated) with human CDK13, thereby increasing HIV-1 mRNA splicing and promoting the production of the doubly spliced HIV-1 protein Nef. Interacts with host TBP; this interaction modulates the activity of transcriptional pre-initiation complex. Interacts with host RELA. Interacts with host PLSCR1; this interaction negatively regulates Tat transactivation activity by altering its subcellular distribution. In terms of processing, asymmetrical arginine methylation by host PRMT6 seems to diminish the transactivation capacity of Tat and affects the interaction with host CCNT1. Post-translationally, acetylation by EP300, CREBBP, GCN5L2/GCN5 and PCAF regulates the transactivation activity of Tat. EP300-mediated acetylation of Lys-50 promotes dissociation of Tat from the TAR RNA through the competitive binding to PCAF's bromodomain. In addition, the non-acetylated Tat's N-terminus can also interact with PCAF. PCAF-mediated acetylation of Lys-28 enhances Tat's binding to CCNT1. Lys-50 is deacetylated by SIRT1. Polyubiquitination by host MDM2 does not target Tat to degradation, but activates its transactivation function and fosters interaction with CCNT1 and TAR RNA. In terms of processing, phosphorylated by EIF2AK2 on serine and threonine residues adjacent to the basic region important for TAR RNA binding and function. Phosphorylation of Tat by EIF2AK2 is dependent on the prior activation of EIF2AK2 by dsRNA.

The protein resides in the host nucleus. It localises to the host nucleolus. It is found in the host cytoplasm. Its subcellular location is the secreted. In terms of biological role, transcriptional activator that increases RNA Pol II processivity, thereby increasing the level of full-length viral transcripts. Recognizes a hairpin structure at the 5'-LTR of the nascent viral mRNAs referred to as the transactivation responsive RNA element (TAR) and recruits the cyclin T1-CDK9 complex (P-TEFb complex) that will in turn hyperphosphorylate the RNA polymerase II to allow efficient elongation. The CDK9 component of P-TEFb and other Tat-activated kinases hyperphosphorylate the C-terminus of RNA Pol II that becomes stabilized and much more processive. Other factors such as HTATSF1/Tat-SF1, SUPT5H/SPT5, and HTATIP2 are also important for Tat's function. Besides its effect on RNA Pol II processivity, Tat induces chromatin remodeling of proviral genes by recruiting the histone acetyltransferases (HATs) CREBBP, EP300 and PCAF to the chromatin. This also contributes to the increase in proviral transcription rate, especially when the provirus integrates in transcriptionally silent region of the host genome. To ensure maximal activation of the LTR, Tat mediates nuclear translocation of NF-kappa-B by interacting with host RELA. Through its interaction with host TBP, Tat may also modulate transcription initiation. Tat can reactivate a latently infected cell by penetrating in it and transactivating its LTR promoter. In the cytoplasm, Tat is thought to act as a translational activator of HIV-1 mRNAs. Extracellular circulating Tat can be endocytosed by surrounding uninfected cells via the binding to several surface receptors such as CD26, CXCR4, heparan sulfate proteoglycans (HSPG) or LDLR. Neurons are rarely infected, but they internalize Tat via their LDLR. Through its interaction with nuclear HATs, Tat is potentially able to control the acetylation-dependent cellular gene expression. Modulates the expression of many cellular genes involved in cell survival, proliferation or in coding for cytokines or cytokine receptors. Tat plays a role in T-cell and neurons apoptosis. Tat induced neurotoxicity and apoptosis probably contribute to neuroAIDS. Circulating Tat also acts as a chemokine-like and/or growth factor-like molecule that binds to specific receptors on the surface of the cells, affecting many cellular pathways. In the vascular system, Tat binds to ITGAV/ITGB3 and ITGA5/ITGB1 integrins dimers at the surface of endothelial cells and competes with bFGF for heparin-binding sites, leading to an excess of soluble bFGF. The protein is Protein Tat of Human immunodeficiency virus type 1 group M subtype B (isolate PCV12) (HIV-1).